The primary structure comprises 476 residues: Glutamate--tRNA ligase (476 aa).

The short motif at 9–19 is the 'HIGH' region element; sequence PSPTGKLHIGT. A compositionally biased stretch (basic and acidic residues) spans 109–129; that stretch reads REEQKSRNKPPRYDNRHRSLS. The tract at residues 109–133 is disordered; that stretch reads REEQKSRNKPPRYDNRHRSLSTEEE. Residues 248 to 252 carry the 'KMSKS' region motif; that stretch reads KLSKR. Lysine 251 contacts ATP.

Belongs to the class-I aminoacyl-tRNA synthetase family. Glutamate--tRNA ligase type 1 subfamily. As to quaternary structure, monomer.

The protein resides in the cytoplasm. The enzyme catalyses tRNA(Glu) + L-glutamate + ATP = L-glutamyl-tRNA(Glu) + AMP + diphosphate. Its function is as follows. Catalyzes the attachment of glutamate to tRNA(Glu) in a two-step reaction: glutamate is first activated by ATP to form Glu-AMP and then transferred to the acceptor end of tRNA(Glu). The sequence is that of Glutamate--tRNA ligase from Prochlorococcus marinus (strain MIT 9211).